The following is a 225-amino-acid chain: Gene 30 protein (225 aa).

The segment at Arg48–Ala73 is disordered. The segment covering Glu51–Ala73 has biased composition (basic and acidic residues).

Its function is as follows. Essential for DNA synthesis. This Bacillus phage SP01 (Bacteriophage SP01) protein is Gene 30 protein (30).